A 214-amino-acid chain; its full sequence is uncharacterized protein (214 aa).

Residues 1–194 form the AMMECR1 domain; the sequence is MVSANREMAV…MHYSEYLSYV (194 aa).

This is an uncharacterized protein from Arabidopsis thaliana (Mouse-ear cress).